The primary structure comprises 177 residues: Bifunctional protein PyrR (177 aa).

Residues 99 to 111 carry the PRPP-binding motif; sequence VVLVDDVLFTGRT.

It belongs to the purine/pyrimidine phosphoribosyltransferase family. PyrR subfamily.

The catalysed reaction is UMP + diphosphate = 5-phospho-alpha-D-ribose 1-diphosphate + uracil. Functionally, regulates the transcription of the pyrimidine nucleotide (pyr) operon in response to exogenous pyrimidines. Also displays a weak uracil phosphoribosyltransferase activity which is not physiologically significant. The protein is Bifunctional protein PyrR of Geobacter sulfurreducens (strain ATCC 51573 / DSM 12127 / PCA).